We begin with the raw amino-acid sequence, 1806 residues long: Focadhesin (1806 aa).

Positions 733-760 (ARPIPKQPEVEDEVKQNEEENEEEEDIS) are disordered.

It is found in the cell junction. Its subcellular location is the focal adhesion. It localises to the cytoplasm. The protein resides in the cytosol. In terms of biological role, required for the maintenance of SKIC2 and SKIC3 proteostatic levels in the liver. May be involved in the regulation of RNA degradation by the exosome complex. This is Focadhesin (focad) from Danio rerio (Zebrafish).